Reading from the N-terminus, the 536-residue chain is Proto-oncogene tyrosine-protein kinase Yrk (536 aa).

Gly2 carries the N-myristoyl glycine lipid modification. Residues Cys3 and Cys6 are each lipidated (S-palmitoyl cysteine). Residues 10–36 (ISGKGQGGSGTGTPAHPPSQYDPDPTQ) are disordered. The region spanning 81-142 (GGVTLFIALY…PSNYVAPVDS (62 aa)) is the SH3 domain. Residues 148 to 245 (WYFGKIGRKD…GLCCRLAVPC (98 aa)) form the SH2 domain. One can recognise a Protein kinase domain in the interval 270 to 523 (LQLLQKLGNG…YLQSFLEDYF (254 aa)). ATP is bound by residues 276–284 (LGNGQFGEV) and Lys298. Catalysis depends on Asp389, which acts as the Proton acceptor. The residue at position 419 (Tyr419) is a Phosphotyrosine; by autocatalysis. The residue at position 530 (Tyr530) is a Phosphotyrosine.

The protein belongs to the protein kinase superfamily. Tyr protein kinase family. SRC subfamily. Phosphorylated. As to expression, there are elevated levels of this protein in neural and hematopoietic tissues.

The enzyme catalyses L-tyrosyl-[protein] + ATP = O-phospho-L-tyrosyl-[protein] + ADP + H(+). Its function is as follows. May participate in signaling pathways. In Gallus gallus (Chicken), this protein is Proto-oncogene tyrosine-protein kinase Yrk (YRK).